Consider the following 144-residue polypeptide: Maximins 3/H9 type 2 (144 aa).

The first 18 residues, 1-18 (MNFKYIVAVSFLIASAYA), serve as a signal peptide directing secretion. 2 consecutive propeptides follow at residues 19–43 (RSVQNDEQSLSQRDVLEEESLREIR) and 74–123 (TAEE…KEKR). Ile143 carries the isoleucine amide modification.

Belongs to the bombinin family. In terms of tissue distribution, expressed by the skin glands.

Its subcellular location is the secreted. In terms of biological role, maximin-3 shows antibacterial activity against both Gram-positive and Gram-negative bacteria. It also shows antimicrobial activity against the fungus C.albicans, but not against A.flavus nor P.uticale. It has little hemolytic activity. It possess a significant cytotoxicity against tumor cell lines. It possess a significant anti-HIV activity. It shows high spermicidal activity. Maximin-H9 shows antimicrobial activity against bacteria and against the fungus C.albicans. Shows strong hemolytic activity. The polypeptide is Maximins 3/H9 type 2 (Bombina maxima (Giant fire-bellied toad)).